The chain runs to 235 residues: Futalosine hydrolase (235 aa).

This sequence belongs to the PNP/UDP phosphorylase family. Futalosine hydrolase subfamily.

It catalyses the reaction futalosine + H2O = dehypoxanthine futalosine + hypoxanthine. The protein operates within quinol/quinone metabolism; menaquinone biosynthesis. Catalyzes the hydrolysis of futalosine (FL) to dehypoxanthine futalosine (DHFL) and hypoxanthine, a step in the biosynthesis of menaquinone (MK, vitamin K2). Does not accept aminodeoxyfutalosine (AFL) as a substrate. This Streptomyces coelicolor (strain ATCC BAA-471 / A3(2) / M145) protein is Futalosine hydrolase.